The sequence spans 113 residues: Hydrogenase maturation factor HypA (113 aa).

H2 is a Ni(2+) binding site. Residues C73, C76, C89, and C92 each coordinate Zn(2+).

Belongs to the HypA/HybF family.

In terms of biological role, involved in the maturation of [NiFe] hydrogenases. Required for nickel insertion into the metal center of the hydrogenase. The sequence is that of Hydrogenase maturation factor HypA from Chlorobaculum tepidum (strain ATCC 49652 / DSM 12025 / NBRC 103806 / TLS) (Chlorobium tepidum).